The following is a 720-amino-acid chain: Collectin-12 (720 aa).

Over 1–37 (MKDDFNDEEEVQSFGYKRFGIQEGNECTKCKNDWALR) the chain is Cytoplasmic. Residues 38 to 58 (VAIALLYVLCALLTIAVAVLG) form a helical; Signal-anchor for type II membrane protein membrane-spanning segment. At 59-720 (YKVVQRMDNV…RTNESKVPVL (662 aa)) the chain is on the extracellular side. Coiled coils occupy residues 95 to 120 (EKSE…QLSD), 216 to 267 (ISSL…LAAN), and 377 to 408 (LHGL…LDKE). A disordered region spans residues 433 to 576 (FTILQGPPGP…GPPGLPGLPA (144 aa)). Collagen-like domains are found at residues 444–503 (GPRG…PGPK) and 510–569 (GRQG…PGPP). Positions 460–479 (PKGEKGEKGAPGDAGPKGEK) are enriched in basic and acidic residues. Positions 488–503 (PGLKGPPGSRGSPGPK) are enriched in low complexity. The segment covering 504-513 (GSRGSGGRQG) has biased composition (gly residues). Over residues 527-560 (PGRDGQPGPTGPQGPQGLRGPAGPAGLEGARGPV) the composition is skewed to low complexity. Over residues 562 to 576 (PIGPPGPPGLPGLPA) the composition is skewed to pro residues. 3 disulfides stabilise this stretch: C604/C615, C634/C709, and C687/C701. The C-type lectin domain maps to 611 to 710 (FREQCYHFSA…CTERIGFICE (100 aa)). Residues I643, N645, and E649 each contribute to the Ca(2+) site. Residues K670, Q673, and D675 each coordinate a carbohydrate. Positions 673, 675, 676, 685, 686, 697, 698, and 710 each coordinate Ca(2+). Residue E685 participates in a carbohydrate binding. 2 residues coordinate a carbohydrate: N697 and D698.

The protein resides in the membrane. Functionally, scavenger receptor that displays several functions associated with host defense. Binds to carbohydrates. This is Collectin-12 (colec12) from Danio rerio (Zebrafish).